The following is a 61-amino-acid chain: Beta-toxin Tce4 (61 aa).

The LCN-type CS-alpha/beta domain occupies 1–61; sequence KEGYLMDHEG…KVWEYATNRC (61 aa). Disulfide bonds link Cys-11–Cys-61, Cys-15–Cys-37, Cys-23–Cys-42, and Cys-27–Cys-44. At Cys-61 the chain carries Cysteine amide.

This sequence belongs to the long (4 C-C) scorpion toxin superfamily. Sodium channel inhibitor family. Beta subfamily. Expressed by the venom gland.

It is found in the secreted. Beta toxins bind voltage-independently at site-4 of sodium channels (Nav) and shift the voltage of activation toward more negative potentials thereby affecting sodium channel activation and promoting spontaneous and repetitive firing. This chain is Beta-toxin Tce4, found in Tityus cerroazul (Scorpion).